We begin with the raw amino-acid sequence, 193 residues long: uncharacterized protein (193 aa).

The interval 1-144 (MEKKRTLSVN…NNNNNNEGTI (144 aa)) is disordered. Residues 29 to 86 (NSLNNIENNECNNNNNNNNNNNNNNSNSNNLNNSNNNNINTSSNSINSSNSINNSIDN) are compositionally biased toward low complexity. Residues 103–118 (KMNSSQEFQSYLTPNK) are compositionally biased toward polar residues. Residues 119–140 (NNNNRNNNNRNNNNNNNNNNNN) show a composition bias toward low complexity. Residues 158-180 (YMIRPFLVGASASFGISIGMFYF) traverse the membrane as a helical segment.

Its subcellular location is the membrane. This is an uncharacterized protein from Dictyostelium discoideum (Social amoeba).